A 393-amino-acid polypeptide reads, in one-letter code: 4-O-methyl-glucuronoyl methylesterase (393 aa).

The signal sequence occupies residues 1 to 19 (MKLSAALLAIAAFANVASA). Gln20 carries the pyrrolidone carboxylic acid modification. Cys22 and Cys56 form a disulfide bridge. N-linked (GlcNAc...) asparagine glycosylation is found at Asn103 and Asn168. The short motif at 203–208 (GCSRNG) is the GXSYXG catalytic site motif element. 2 cysteine pairs are disulfide-bonded: Cys204/Cys340 and Cys236/Cys312. Ser205 functions as the Nucleophile in the catalytic mechanism. Positions 209, 251, 259, and 303 each coordinate substrate. The active-site Proton donor/acceptor is His339.

This sequence belongs to the carbohydrate esterase 15 (CE15) family.

The protein localises to the secreted. The enzyme catalyses a 4-O-methyl-alpha-D-glucuronosyl ester derivative + H2O = 4-O-methyl-alpha-D-glucuronate derivative + an alcohol + H(+). Its function is as follows. Glucuronoyl esterase which may play a significant role in biomass degradation, as it is considered to disconnect hemicellulose from lignin through the hydrolysis of the ester bond between 4-O-methyl-D-glucuronic acid residues of glucuronoxylans and aromatic alcohols of lignin. This Schizophyllum commune (strain H4-8 / FGSC 9210) (Split gill fungus) protein is 4-O-methyl-glucuronoyl methylesterase.